The chain runs to 277 residues: MVRVGAHTSIAGGVYNAVEEQVEYSGNCGQIFSHSPQVWQDPNIDDDEAEQFRDLAADHGVGPWVIHSSYLVNLCTPKDDLREKSLDSMQKEVDAAAKLGIEYVNVHLGAHTGAGVDGGLDNAASVLDDLDIPEGVTVLVESDAGSGTKLGGQFEHLATVRERTDQDIEFCLDTAHMFAAGYDLSTPEAVDETLAEFDEVVGVEDLACVHLNDSKHECGTNKDEHAHIGEGHIGEDGMRAFVNHDAIRDVPLVLETPTENGKSFAWNIERVKELRGE.

Residues His67, His107, Glu141, Asp173, His176, His210, Asp223, His225, and Glu255 each coordinate Zn(2+).

It belongs to the AP endonuclease 2 family. Zn(2+) serves as cofactor.

It catalyses the reaction Endonucleolytic cleavage to 5'-phosphooligonucleotide end-products.. In terms of biological role, endonuclease IV plays a role in DNA repair. It cleaves phosphodiester bonds at apurinic or apyrimidinic (AP) sites, generating a 3'-hydroxyl group and a 5'-terminal sugar phosphate. The polypeptide is Probable endonuclease 4 (Haloarcula marismortui (strain ATCC 43049 / DSM 3752 / JCM 8966 / VKM B-1809) (Halobacterium marismortui)).